A 201-amino-acid chain; its full sequence is Pyridoxal 5'-phosphate synthase subunit PdxT (201 aa).

Gly-51–Ser-53 contacts L-glutamine. The Nucleophile role is filled by Cys-83. Residues Arg-112 and Ile-141–Arg-142 contribute to the L-glutamine site. Active-site charge relay system residues include His-182 and Glu-184.

It belongs to the glutaminase PdxT/SNO family. As to quaternary structure, in the presence of PdxS, forms a dodecamer of heterodimers. Only shows activity in the heterodimer.

The catalysed reaction is aldehydo-D-ribose 5-phosphate + D-glyceraldehyde 3-phosphate + L-glutamine = pyridoxal 5'-phosphate + L-glutamate + phosphate + 3 H2O + H(+). It catalyses the reaction L-glutamine + H2O = L-glutamate + NH4(+). It functions in the pathway cofactor biosynthesis; pyridoxal 5'-phosphate biosynthesis. In terms of biological role, catalyzes the hydrolysis of glutamine to glutamate and ammonia as part of the biosynthesis of pyridoxal 5'-phosphate. The resulting ammonia molecule is channeled to the active site of PdxS. This Thermobifida fusca (strain YX) protein is Pyridoxal 5'-phosphate synthase subunit PdxT.